The sequence spans 598 residues: Dihydroxy-acid dehydratase, mitochondrial (598 aa).

A mitochondrion-targeting transit peptide spans 1-18; that stretch reads MMFCKLLRCQNGIASKRA. Residue Cys-84 participates in [2Fe-2S] cluster binding. Asp-116 contacts Mg(2+). Cys-157 is a [2Fe-2S] cluster binding site. Asp-158 lines the Mg(2+) pocket. A [2Fe-2S] cluster-binding site is contributed by Cys-232. Residue Glu-485 coordinates Mg(2+). The active-site Proton acceptor is the Ser-511.

The protein belongs to the IlvD/Edd family. The cofactor is [2Fe-2S] cluster. Mg(2+) is required as a cofactor.

Its subcellular location is the mitochondrion. It carries out the reaction (2R)-2,3-dihydroxy-3-methylbutanoate = 3-methyl-2-oxobutanoate + H2O. The catalysed reaction is (2R,3R)-2,3-dihydroxy-3-methylpentanoate = (S)-3-methyl-2-oxopentanoate + H2O. Its pathway is amino-acid biosynthesis; L-isoleucine biosynthesis; L-isoleucine from 2-oxobutanoate: step 3/4. It functions in the pathway amino-acid biosynthesis; L-valine biosynthesis; L-valine from pyruvate: step 3/4. Its function is as follows. Dihydroxyacid dehydratase that catalyzes the third step in the common pathway leading to biosynthesis of branched-chain amino acids. Catalyzes the dehydration of (2R,3R)-2,3-dihydroxy-3-methylpentanoate (2,3-dihydroxy-3-methylvalerate) into 2-oxo-3-methylpentanoate (2-oxo-3-methylvalerate) and of (2R)-2,3-dihydroxy-3-methylbutanoate (2,3-dihydroxyisovalerate) into 2-oxo-3-methylbutanoate (2-oxoisovalerate), the penultimate precursor to L-isoleucine and L-valine, respectively. The sequence is that of Dihydroxy-acid dehydratase, mitochondrial from Schizosaccharomyces pombe (strain 972 / ATCC 24843) (Fission yeast).